The primary structure comprises 264 residues: Probable mobile endonuclease B (264 aa).

The region spanning 25 to 50 (TYYTETHHIIPRCMGGTDDKTNLVLL) is the HNH domain.

It to phage T4 mobC and mobD.

The protein is Probable mobile endonuclease B (mobB) of Escherichia coli (Bacteriophage T4).